A 121-amino-acid polypeptide reads, in one-letter code: Small ribosomal subunit protein uS13 (121 aa).

The disordered stretch occupies residues 91–121 (HRMSLPVRGQRTRTNARTRRGSRKTVAGRKK). The segment covering 100–121 (QRTRTNARTRRGSRKTVAGRKK) has biased composition (basic residues).

This sequence belongs to the universal ribosomal protein uS13 family. Part of the 30S ribosomal subunit. Forms a loose heterodimer with protein S19. Forms two bridges to the 50S subunit in the 70S ribosome.

Its function is as follows. Located at the top of the head of the 30S subunit, it contacts several helices of the 16S rRNA. In the 70S ribosome it contacts the 23S rRNA (bridge B1a) and protein L5 of the 50S subunit (bridge B1b), connecting the 2 subunits; these bridges are implicated in subunit movement. Contacts the tRNAs in the A and P-sites. This Prochlorococcus marinus (strain MIT 9211) protein is Small ribosomal subunit protein uS13.